The sequence spans 510 residues: Maturase K (510 aa).

This sequence belongs to the intron maturase 2 family. MatK subfamily.

Its subcellular location is the plastid. It is found in the chloroplast. Functionally, usually encoded in the trnK tRNA gene intron. Probably assists in splicing its own and other chloroplast group II introns. The sequence is that of Maturase K from Anomochloa marantoidea (Herbaceous bamboo).